Consider the following 662-residue polypeptide: Chaperone protein HtpG (662 aa).

Positions 1–352 are a; substrate-binding; it reads MSKQTLSFQA…SADLPLNVSR (352 aa). The b stretch occupies residues 353 to 594; sequence ELLQESRDVR…GDGMSTQLAR (242 aa). The segment at 382–402 is disordered; sequence HDRHDSPAPQPAEGADRVSDV. Positions 595–662 are c; the sequence is LLKQAGQQAP…YVKRVNALLV (68 aa).

The protein belongs to the heat shock protein 90 family. As to quaternary structure, homodimer.

The protein resides in the cytoplasm. Its function is as follows. Molecular chaperone. Has ATPase activity. The sequence is that of Chaperone protein HtpG from Verminephrobacter eiseniae (strain EF01-2).